Consider the following 93-residue polypeptide: Small ribosomal subunit protein uS19 (93 aa).

It belongs to the universal ribosomal protein uS19 family.

In terms of biological role, protein S19 forms a complex with S13 that binds strongly to the 16S ribosomal RNA. This chain is Small ribosomal subunit protein uS19, found in Leifsonia xyli subsp. xyli (strain CTCB07).